The chain runs to 281 residues: CLA biosynthesis isomerase (281 aa).

The protein belongs to the ADC family.

Its subcellular location is the cytoplasm. It catalyses the reaction 10-oxo-(12Z)-octadecenoate = 10-oxo-(11E)-octadecenoate. The protein operates within lipid metabolism; fatty acid metabolism. In terms of biological role, is involved in a saturation metabolic pathway of polyunsaturated fatty acids, that detoxifies unsaturated fatty acids and generates hydroxy fatty acids, oxo fatty acids, conjugated fatty acids such as conjugated linoleic acids (CLAs), and partially saturated trans-fatty acids as intermediates. CLA-DC catalyzes the migration of the carbon-carbon double bond in 10-oxo-(12Z)-octadecenoate to produce 10-oxo-(11E)-octadecenoate, during linoleate metabolism. As part of the gut microbiome, this enzyme modifies host fatty acid composition and is expected to improve human health by altering lipid metabolism related to the onset of metabolic syndrome. The protein is CLA biosynthesis isomerase of Lactiplantibacillus plantarum (Lactobacillus plantarum).